A 576-amino-acid chain; its full sequence is (E,E)-alpha-farnesene synthase (576 aa).

(2E,6E)-farnesyl diphosphate-binding residues include R289, D326, D330, R468, and N471. 2 residues coordinate Mg(2+): D326 and D330. The DDXXD motif signature appears at 326–330 (DDVYD). Residues N471, T475, and E479 each coordinate Mg(2+). Residues D484 and S487 each contribute to the K(+) site.

Belongs to the terpene synthase family. Tpsb subfamily. As to quaternary structure, monomer. It depends on Mg(2+) as a cofactor. Mn(2+) is required as a cofactor. Requires K(+) as cofactor.

The protein localises to the cytoplasm. The enzyme catalyses (2E,6E)-farnesyl diphosphate = (3E,6E)-alpha-farnesene + diphosphate. Sesquiterpene synthase catalyzing the production of (E,E)-alpha-farnesene, the predominant terpene produced during storage of fruits. Produces all six isomers (E,E)-alpha-farnesene, (Z,E)-alpha-farnesene, (E,Z)-alpha-farnesene, (Z,Z)-alpha-farnesene, (E)-beta-farnesene and (Z)-beta-farnesene from a mix of isomeric forms of the farnesyl diphosphate precursor. Able to convert geranyl diphosphate to the monoterpenes (E)-beta-ocimene, linalool and beta-myrcene. Also has a prenyltransferase activity producing alpha-farnesene directly from geranyl diphosphate and isoprenyl diphosphate. This chain is (E,E)-alpha-farnesene synthase (AFS1), found in Malus domestica (Apple).